Here is a 722-residue protein sequence, read N- to C-terminus: Cellulose synthase-like protein G2 (722 aa).

The next 2 membrane-spanning stretches (helical) occupy residues 25-45 and 51-71; these read IYAVFHTCGIIALMYHHVHSI and TLITCLLLLSDIVLAFMWATT. Residues D139 and D437 contribute to the active site. Helical transmembrane passes span 514–534, 548–568, 583–605, 635–655, 660–680, and 702–722; these read FWPFWCIPLVVYGILPQVALI, FWLYIILFLGGYAQDLSDFLL, WMVRGLSSFFFGFTEFTLKTLNL, PSSSMFLPITTVAIMNLLAFM, GIFTWGEGPVLELMLASFAVV, and ICFLAGLLSFVLTGSGYFFLK.

This sequence belongs to the glycosyltransferase 2 family. Plant cellulose synthase-like G subfamily. In terms of tissue distribution, expressed in young seedlings, primarily in the vascular tissue.

Its subcellular location is the golgi apparatus membrane. Thought to be a Golgi-localized beta-glycan synthase that polymerize the backbones of noncellulosic polysaccharides (hemicelluloses) of plant cell wall. This Arabidopsis thaliana (Mouse-ear cress) protein is Cellulose synthase-like protein G2 (CSLG2).